The primary structure comprises 196 residues: Cysteine/O-acetylserine efflux protein (196 aa).

A helical membrane pass occupies residues 1-21 (MTPTLISAFLTYTLITALTPG). The Cytoplasmic portion of the chain corresponds to 22-41 (PNNILALSSVTSHGLRRSLR). Residues 42–62 (VLAGMSVGFIITMLICAALTF) traverse the membrane as a helical segment. At 63-70 (SLVELDSR) the chain is on the periplasmic side. Residues 71-91 (FTLVLGWIGAAYILWLAWQIA) traverse the membrane as a helical segment. The Cytoplasmic segment spans residues 92–114 (KSKPATGTPSVEPVGFWASLGLQ). Residues 115–135 (FVNVKIILYGITALSTFVLPV) traverse the membrane as a helical segment. At 136–139 (TREP) the chain is on the periplasmic side. A helical transmembrane segment spans residues 140–160 (VWLISVSLLLAAIGALGNLCW). Topologically, residues 161–170 (ALAGHLFQRL) are cytoplasmic. A helical membrane pass occupies residues 171–191 (FLLYGRQLNWMLAALLVYCAV). Topologically, residues 192–196 (RIVVE) are periplasmic.

Belongs to the Rht family.

The protein resides in the cell inner membrane. The enzyme catalyses O-acetyl-L-serine(in) = O-acetyl-L-serine(out). It carries out the reaction L-cysteine(in) = L-cysteine(out). Exporter of O-acetylserine (OAS) and cysteine. The polypeptide is Cysteine/O-acetylserine efflux protein (eamB) (Klebsiella pneumoniae subsp. pneumoniae (strain ATCC 700721 / MGH 78578)).